The chain runs to 136 residues: Small ribosomal subunit protein uS8c (136 aa).

Belongs to the universal ribosomal protein uS8 family. In terms of assembly, part of the 30S ribosomal subunit.

Its subcellular location is the plastid. It is found in the chloroplast. One of the primary rRNA binding proteins, it binds directly to 16S rRNA central domain where it helps coordinate assembly of the platform of the 30S subunit. The protein is Small ribosomal subunit protein uS8c (rps8) of Morus indica (Mulberry).